Here is a 506-residue protein sequence, read N- to C-terminus: Cysteine protease 1 (506 aa).

The interval 1–21 (MTSSRPSGRDSTGWQETVSNT) is disordered. The active-site Nucleophile is the cysteine 226. Active-site residues include aspartate 399 and histidine 401.

It belongs to the peptidase C54 family.

The protein resides in the cytoplasm. It is found in the nucleus. Its subcellular location is the preautophagosomal structure. The catalysed reaction is [protein]-C-terminal L-amino acid-glycyl-phosphatidylethanolamide + H2O = [protein]-C-terminal L-amino acid-glycine + a 1,2-diacyl-sn-glycero-3-phosphoethanolamine. In terms of biological role, cysteine protease that plays a key role in cytoplasm to vacuole transport (Cvt) and autophagy by mediating both proteolytic activation and delipidation of ATG8. Required for selective autophagic degradation of the nucleus (nucleophagy) as well as for mitophagy which contributes to regulate mitochondrial quantity and quality by eliminating the mitochondria to a basal level to fulfill cellular energy requirements and preventing excess ROS production. The protease activity is required for proteolytic activation of ATG8: cleaves the C-terminal amino acid of ATG8 to reveal a C-terminal glycine. ATG8 ubiquitin-like activity requires the exposure of the glycine at the C-terminus for its conjugation to phosphatidylethanolamine (PE) and its insertion to membranes, which is necessary for autophagy. The ATG8-PE conjugate mediates tethering between adjacent membranes and stimulates membrane hemifusion, leading to expansion of the autophagosomal membrane during autophagy. In addition to the protease activity, also catalyzes deconjugation of PE-conjugated forms of ATG8 during macroautophagy: ATG8 delipidation is required to release the protein from membranes, which facilitates multiple events during macroautophagy, and especially for efficient autophagosome biogenesis, the assembly of ATG9-containing tubulovesicular clusters into phagophores/autophagosomes, and for the disassembly of PAS-associated ATG components. ATG8 delipidation by ATG4 also recycles ATG8-PE generated on inappropriate membranes to maintain a reservoir of unlipidated ATG8 that is required for autophagosome formation at the PAS. The protein is Cysteine protease 1 (cpr-1) of Neurospora crassa (strain ATCC 24698 / 74-OR23-1A / CBS 708.71 / DSM 1257 / FGSC 987).